Here is a 278-residue protein sequence, read N- to C-terminus: HTH-type transcriptional activator RhaS (278 aa).

The region spanning 174-272 is the HTH araC/xylS-type domain; that stretch reads NLLLAWLEDH…NWSPRDIRQG (99 aa). DNA-binding regions (H-T-H motif) lie at residues 191-212 and 239-262; these read DAVA…KQQT and VTDI…RREF.

As to quaternary structure, binds DNA as a dimer.

The protein localises to the cytoplasm. In terms of biological role, activates expression of the rhaBAD and rhaT operons. This chain is HTH-type transcriptional activator RhaS, found in Escherichia coli (strain SE11).